We begin with the raw amino-acid sequence, 594 residues long: MGKKSRVKTQKSGTGATATVSPKEILNLTSELLQKCSSPAPSPGKEWEEYTQIRALVEKIRKKQKGLSVTFDGKREDYFPDLMKWASENGASVEGFEMVNFKEEGFGLRATRDIKAEELFLWVPRKLLMTVESAKNSVLGPLYSQDRILQAMGNIALAFHLLCERASPNSFWQPYIQTLPSEYDTPLYFEEEEVRCLQSTQAIHDVFSQYKNTARQYAYFYKVIQTHPHANKLPLKESFTYEDYRWAVSSVMTRQNQIPTEDGSRVTLALIPLWDMCNHTNGLITTGYNLEDDRCECVALQDFQAGDQIYIFYGTRSNAEFVIHSGFFFDNNSHDRVKIKLGVSKSDRLYAMKAEVLARAGIPTSSVFALHSTEPPISAQLLAFLRVFCMTEEELKEHLLGDSAIDRIFTLGNAEFPVSWDNEVKLWTFLEDRASLLLKTYKTTIEEDKIVLKNPDLSVRATMAIKLRLGEKEILEKAVKSAAVNREYYRKHMEERAPLPRYEESDLGLLEGGVGDSRLPLVLRKLEEEAGVQESLSLTETVSKVKAAENGLVNGENLIPNGTRSENESLSPEESENVTGEESSGSMAKVKERL.

The segment at 1 to 22 is disordered; it reads MGKKSRVKTQKSGTGATATVSP. Residues 10–20 show a composition bias toward polar residues; sequence QKSGTGATATV. S-adenosyl-L-methionine-binding positions include Arg-75, 104-106, Arg-254, 275-279, and 325-327; these read EGF, DMCNH, and SGF. In terms of domain architecture, SET spans 94–314; that stretch reads EGFEMVNFKE…AGDQIYIFYG (221 aa). Residues 551-594 form a disordered region; that stretch reads GLVNGENLIPNGTRSENESLSPEESENVTGEESSGSMAKVKERL.

The protein belongs to the class V-like SAM-binding methyltransferase superfamily. SETD3 actin-histidine methyltransferase family. As to quaternary structure, interacts with MYOD1. Post-translationally, phosphorylated by GSK3B, which is required for recognition by the SCF(FBXW7) complex and subsequent degradation. In terms of processing, ubiquitinated by the SCF(FBXW7) complex following phosphorylation by GSK3B, leading to its degradation by the proteasome. As to expression, prominently expressed in the heart and skeletal muscles and is also detected weakly in the stomach, small intestine, and colon.

The protein localises to the cytoplasm. It is found in the nucleus. It carries out the reaction L-histidyl-[protein] + S-adenosyl-L-methionine = N(tele)-methyl-L-histidyl-[protein] + S-adenosyl-L-homocysteine + H(+). Its function is as follows. Protein-histidine N-methyltransferase that specifically mediates 3-methylhistidine (tele-methylhistidine) methylation of actin at 'His-73'. Histidine methylation of actin is required for smooth muscle contraction of the laboring uterus during delivery. Does not have protein-lysine N-methyltransferase activity and probably only catalyzes histidine methylation of actin. This chain is Actin-histidine N-methyltransferase, found in Mus musculus (Mouse).